A 66-amino-acid chain; its full sequence is Putative transmembrane protein ORF66 (66 aa).

Over methionine 1–aspartate 6 the chain is Cytoplasmic. Residues threonine 7–valine 27 form a helical membrane-spanning segment. At serine 28 to glutamate 39 the chain is on the extracellular side. The chain crosses the membrane as a helical span at residues tyrosine 40 to glycine 60. Residues lysine 61 to serine 66 are Cytoplasmic-facing.

Its subcellular location is the host membrane. The sequence is that of Putative transmembrane protein ORF66 from Acidianus filamentous virus 2 (isolate Italy/Pozzuoli) (AFV-2).